A 166-amino-acid polypeptide reads, in one-letter code: Co-chaperone protein HscB homolog (166 aa).

A J domain is found at 3–75; sequence QYFTLFRIEP…IDRAAYLLKT (73 aa).

It belongs to the HscB family. In terms of assembly, interacts with HscA and stimulates its ATPase activity.

Its function is as follows. Co-chaperone involved in the maturation of iron-sulfur cluster-containing proteins. Seems to help targeting proteins to be folded toward HscA. The protein is Co-chaperone protein HscB homolog of Neisseria meningitidis serogroup C (strain 053442).